We begin with the raw amino-acid sequence, 60 residues long: Protein YmjC (60 aa).

The interval 40–60 is disordered; the sequence is HKPYPTNKMQTTSGKKVIQDR.

The protein is Protein YmjC (ymjC) of Escherichia coli (strain K12).